The primary structure comprises 340 residues: Glycerol-3-phosphate dehydrogenase [NAD(P)+] (340 aa).

Positions 11, 12, 33, and 106 each coordinate NADPH. Sn-glycerol 3-phosphate contacts are provided by K106, G137, and S139. A141 contacts NADPH. Sn-glycerol 3-phosphate contacts are provided by K192, D245, S255, R256, and N257. K192 serves as the catalytic Proton acceptor. R256 contacts NADPH. NADPH contacts are provided by V280 and E282.

The protein belongs to the NAD-dependent glycerol-3-phosphate dehydrogenase family.

Its subcellular location is the cytoplasm. It carries out the reaction sn-glycerol 3-phosphate + NAD(+) = dihydroxyacetone phosphate + NADH + H(+). The enzyme catalyses sn-glycerol 3-phosphate + NADP(+) = dihydroxyacetone phosphate + NADPH + H(+). It participates in membrane lipid metabolism; glycerophospholipid metabolism. In terms of biological role, catalyzes the reduction of the glycolytic intermediate dihydroxyacetone phosphate (DHAP) to sn-glycerol 3-phosphate (G3P), the key precursor for phospholipid synthesis. The sequence is that of Glycerol-3-phosphate dehydrogenase [NAD(P)+] from Bacillus mycoides (strain KBAB4) (Bacillus weihenstephanensis).